Here is a 214-residue protein sequence, read N- to C-terminus: Pyrrolidone-carboxylate peptidase (214 aa).

Residues Glu78, Cys141, and His165 contribute to the active site.

It belongs to the peptidase C15 family. Homotetramer.

The protein localises to the cytoplasm. The enzyme catalyses Release of an N-terminal pyroglutamyl group from a polypeptide, the second amino acid generally not being Pro.. Its function is as follows. Removes 5-oxoproline from various penultimate amino acid residues except L-proline. This is Pyrrolidone-carboxylate peptidase from Streptococcus pneumoniae serotype 2 (strain D39 / NCTC 7466).